The following is a 521-amino-acid chain: Ribonuclease Y (521 aa).

The helical transmembrane segment at Leu-10–Leu-30 threads the bilayer. Residues Thr-210–Leu-270 enclose the KH domain. Residues Val-336–Ala-430 form the HD domain.

Belongs to the RNase Y family.

The protein resides in the cell membrane. Endoribonuclease that initiates mRNA decay. This chain is Ribonuclease Y, found in Caldicellulosiruptor saccharolyticus (strain ATCC 43494 / DSM 8903 / Tp8T 6331).